Consider the following 134-residue polypeptide: Profilin-3 (134 aa).

C13 and C118 are disulfide-bonded. The Involved in PIP2 interaction signature appears at 84-100; sequence AVIRGKKGSGGITIKKT. T114 is modified (phosphothreonine).

This sequence belongs to the profilin family. Occurs in many kinds of cells as a complex with monomeric actin in a 1:1 ratio. Phosphorylated by MAP kinases.

The protein localises to the cytoplasm. It is found in the cytoskeleton. Functionally, binds to actin and affects the structure of the cytoskeleton. At high concentrations, profilin prevents the polymerization of actin, whereas it enhances it at low concentrations. In Olea europaea (Common olive), this protein is Profilin-3.